The primary structure comprises 224 residues: Large ribosomal subunit protein uL4 (224 aa).

The tract at residues 54-73 is disordered; sequence NRSEVSHSTKKPFRQKGTGN.

Belongs to the universal ribosomal protein uL4 family. As to quaternary structure, part of the 50S ribosomal subunit.

Its function is as follows. One of the primary rRNA binding proteins, this protein initially binds near the 5'-end of the 23S rRNA. It is important during the early stages of 50S assembly. It makes multiple contacts with different domains of the 23S rRNA in the assembled 50S subunit and ribosome. Functionally, forms part of the polypeptide exit tunnel. The sequence is that of Large ribosomal subunit protein uL4 from Chlamydia felis (strain Fe/C-56) (Chlamydophila felis).